The primary structure comprises 177 residues: 3-hydroxyanthranilate 3,4-dioxygenase (177 aa).

Arg-47 provides a ligand contact to O2. 3 residues coordinate Fe cation: His-51, Glu-57, and His-95. Glu-57 provides a ligand contact to substrate. Substrate-binding residues include Arg-99 and Glu-110. Fe cation is bound by residues Cys-125, Cys-128, Cys-162, and Cys-165.

Belongs to the 3-HAO family. Homodimer. Fe(2+) is required as a cofactor.

The enzyme catalyses 3-hydroxyanthranilate + O2 = (2Z,4Z)-2-amino-3-carboxymuconate 6-semialdehyde. The protein operates within cofactor biosynthesis; NAD(+) biosynthesis; quinolinate from L-kynurenine: step 3/3. In terms of biological role, catalyzes the oxidative ring opening of 3-hydroxyanthranilate to 2-amino-3-carboxymuconate semialdehyde, which spontaneously cyclizes to quinolinate. The sequence is that of 3-hydroxyanthranilate 3,4-dioxygenase from Burkholderia cenocepacia (strain ATCC BAA-245 / DSM 16553 / LMG 16656 / NCTC 13227 / J2315 / CF5610) (Burkholderia cepacia (strain J2315)).